Reading from the N-terminus, the 250-residue chain is Hydroxyethylthiazole kinase (250 aa).

Position 39 (M39) interacts with substrate. Residues R114 and T159 each coordinate ATP. Substrate is bound at residue G186.

It belongs to the Thz kinase family. The cofactor is Mg(2+).

The catalysed reaction is 5-(2-hydroxyethyl)-4-methylthiazole + ATP = 4-methyl-5-(2-phosphooxyethyl)-thiazole + ADP + H(+). The protein operates within cofactor biosynthesis; thiamine diphosphate biosynthesis; 4-methyl-5-(2-phosphoethyl)-thiazole from 5-(2-hydroxyethyl)-4-methylthiazole: step 1/1. Catalyzes the phosphorylation of the hydroxyl group of 4-methyl-5-beta-hydroxyethylthiazole (THZ). In Lactococcus lactis subsp. cremoris (strain SK11), this protein is Hydroxyethylthiazole kinase.